The following is a 253-amino-acid chain: Indole-3-glycerol phosphate synthase (253 aa).

This sequence belongs to the TrpC family.

The catalysed reaction is 1-(2-carboxyphenylamino)-1-deoxy-D-ribulose 5-phosphate + H(+) = (1S,2R)-1-C-(indol-3-yl)glycerol 3-phosphate + CO2 + H2O. It functions in the pathway amino-acid biosynthesis; L-tryptophan biosynthesis; L-tryptophan from chorismate: step 4/5. This is Indole-3-glycerol phosphate synthase from Bacillus cereus (strain G9842).